Reading from the N-terminus, the 21-residue chain is M-lycotoxin-Ls4a (21 aa).

L21 is modified (leucine amide).

Expressed by the venom gland.

Its subcellular location is the secreted. Its function is as follows. May inhibit growth of bacteria. In Lycosa singoriensis (Wolf spider), this protein is M-lycotoxin-Ls4a.